A 329-amino-acid chain; its full sequence is Isopenicillin N synthase (329 aa).

4 residues coordinate isopenicillin N: Arg87, Tyr91, Ser183, and Tyr189. N-[(5S)-5-amino-5-carboxypentanoyl]-L-cysteinyl-D-valine contacts are provided by Arg87, Tyr91, Ser183, Tyr189, His212, and Asp214. The region spanning 180-286 (TLSSVSLIRY…RLSLPFFLNA (107 aa)) is the Fe2OG dioxygenase domain. Residues His212, Asp214, and His268 each coordinate Fe(2+). Arg277 lines the 2-oxoglutarate pocket. Residue Ser279 coordinates isopenicillin N. Residue Ser279 coordinates N-[(5S)-5-amino-5-carboxypentanoyl]-L-cysteinyl-D-valine.

Belongs to the iron/ascorbate-dependent oxidoreductase family. Requires Fe cation as cofactor. It depends on L-ascorbate as a cofactor.

The catalysed reaction is N-[(5S)-5-amino-5-carboxypentanoyl]-L-cysteinyl-D-valine + O2 = isopenicillin N + 2 H2O. Its pathway is antibiotic biosynthesis; penicillin G biosynthesis; penicillin G from L-alpha-aminoadipate and L-cysteine and L-valine: step 2/3. Functionally, removes, in the presence of oxygen, 4 hydrogen atoms from delta-L-(alpha-aminoadipyl)-L-cysteinyl-D-valine (ACV) to form the azetidinone and thiazolidine rings of isopenicillin. In Streptomyces jumonjinensis, this protein is Isopenicillin N synthase (pcbC).